Consider the following 156-residue polypeptide: MSRRSVTKKRVVPPDAVYNNRLLSMTIRRVMKSGKKSLAARIVYDALDIIKERTGSDPIEVFETAIRNLTPLVEVKARRVGGATYQVPMEVRQGRGTALALRWLIGYARQRSGKSMAIKLANELMDAANETGGAIKKREDTHRMAEANKAFAHYRY.

The protein belongs to the universal ribosomal protein uS7 family. Part of the 30S ribosomal subunit. Contacts proteins S9 and S11.

Functionally, one of the primary rRNA binding proteins, it binds directly to 16S rRNA where it nucleates assembly of the head domain of the 30S subunit. Is located at the subunit interface close to the decoding center, probably blocks exit of the E-site tRNA. The sequence is that of Small ribosomal subunit protein uS7 from Picosynechococcus sp. (strain ATCC 27264 / PCC 7002 / PR-6) (Agmenellum quadruplicatum).